Here is a 100-residue protein sequence, read N- to C-terminus: Defensin-like protein 316 (100 aa).

Positions 1–18 (MASHIICYIFCIIKLSCA) are cleaved as a signal peptide. Disulfide bonds link cysteine 21-cysteine 84, cysteine 43-cysteine 64, and cysteine 53-cysteine 76.

This sequence belongs to the DEFL family.

The protein localises to the secreted. The polypeptide is Defensin-like protein 316 (Arabidopsis thaliana (Mouse-ear cress)).